An 840-amino-acid polypeptide reads, in one-letter code: DNA gyrase subunit A (840 aa).

In terms of domain architecture, Topo IIA-type catalytic spans 51-516 (LPDVRDGFKP…VSSHIDDEDL (466 aa)). The O-(5'-phospho-DNA)-tyrosine intermediate role is filled by tyrosine 139. The short motif at 543-549 (QRRGGVG) is the GyrA-box element.

Belongs to the type II topoisomerase GyrA/ParC subunit family. Heterotetramer, composed of two GyrA and two GyrB chains. In the heterotetramer, GyrA contains the active site tyrosine that forms a transient covalent intermediate with DNA, while GyrB binds cofactors and catalyzes ATP hydrolysis.

Its subcellular location is the cytoplasm. It carries out the reaction ATP-dependent breakage, passage and rejoining of double-stranded DNA.. A type II topoisomerase that negatively supercoils closed circular double-stranded (ds) DNA in an ATP-dependent manner to modulate DNA topology and maintain chromosomes in an underwound state. Negative supercoiling favors strand separation, and DNA replication, transcription, recombination and repair, all of which involve strand separation. Also able to catalyze the interconversion of other topological isomers of dsDNA rings, including catenanes and knotted rings. Type II topoisomerases break and join 2 DNA strands simultaneously in an ATP-dependent manner. This chain is DNA gyrase subunit A, found in Ureaplasma parvum serovar 3 (strain ATCC 700970).